The primary structure comprises 388 residues: Mannitol-1-phosphate 5-dehydrogenase (388 aa).

5 to 16 (AIQFGGGNIGRG) lines the NAD(+) pocket. Lysine 213 is an active-site residue.

It belongs to the mannitol dehydrogenase family. In terms of assembly, monomer.

The catalysed reaction is D-mannitol 1-phosphate + NAD(+) = beta-D-fructose 6-phosphate + NADH + H(+). Catalyzes the NAD(H)-dependent interconversion of D-fructose 6-phosphate and D-mannitol 1-phosphate in the mannitol metabolic pathway. The polypeptide is Mannitol-1-phosphate 5-dehydrogenase (mpdA) (Aspergillus terreus (strain NIH 2624 / FGSC A1156)).